Consider the following 149-residue polypeptide: UPF0179 protein MM_0589 (149 aa).

Belongs to the UPF0179 family.

The sequence is that of UPF0179 protein MM_0589 from Methanosarcina mazei (strain ATCC BAA-159 / DSM 3647 / Goe1 / Go1 / JCM 11833 / OCM 88) (Methanosarcina frisia).